The following is a 397-amino-acid chain: Phosphoglycerate kinase (397 aa).

Substrate contacts are provided by residues 21–23 (DFN), arginine 37, 60–63 (HLGR), arginine 119, and arginine 152. ATP-binding positions include lysine 203, glycine 294, glutamate 325, and 354 to 357 (GGDS).

The protein belongs to the phosphoglycerate kinase family. Monomer.

Its subcellular location is the cytoplasm. It catalyses the reaction (2R)-3-phosphoglycerate + ATP = (2R)-3-phospho-glyceroyl phosphate + ADP. The protein operates within carbohydrate degradation; glycolysis; pyruvate from D-glyceraldehyde 3-phosphate: step 2/5. The polypeptide is Phosphoglycerate kinase (Chlorobaculum tepidum (strain ATCC 49652 / DSM 12025 / NBRC 103806 / TLS) (Chlorobium tepidum)).